The chain runs to 285 residues: Elongation factor Ts (285 aa).

The segment at Thr84 to Val87 is involved in Mg(2+) ion dislocation from EF-Tu.

This sequence belongs to the EF-Ts family.

Its subcellular location is the cytoplasm. Associates with the EF-Tu.GDP complex and induces the exchange of GDP to GTP. It remains bound to the aminoacyl-tRNA.EF-Tu.GTP complex up to the GTP hydrolysis stage on the ribosome. This Bifidobacterium animalis subsp. lactis (strain AD011) protein is Elongation factor Ts.